Consider the following 278-residue polypeptide: Putative glycosyltransferase EpsE (278 aa).

It belongs to the glycosyltransferase 2 family.

In terms of biological role, may be involved in the production of the exopolysaccharide (EPS) component of the extracellular matrix during biofilm formation. EPS is responsible for the adhesion of chains of cells into bundles. Required for biofilm maintenance. This Bacillus subtilis (strain 168) protein is Putative glycosyltransferase EpsE (epsE).